A 315-amino-acid chain; its full sequence is Tetraacyldisaccharide 4'-kinase (315 aa).

52–59 contributes to the ATP binding site; that stretch reads TVGGTGKT.

This sequence belongs to the LpxK family.

It carries out the reaction a lipid A disaccharide + ATP = a lipid IVA + ADP + H(+). The protein operates within glycolipid biosynthesis; lipid IV(A) biosynthesis; lipid IV(A) from (3R)-3-hydroxytetradecanoyl-[acyl-carrier-protein] and UDP-N-acetyl-alpha-D-glucosamine: step 6/6. Its function is as follows. Transfers the gamma-phosphate of ATP to the 4'-position of a tetraacyldisaccharide 1-phosphate intermediate (termed DS-1-P) to form tetraacyldisaccharide 1,4'-bis-phosphate (lipid IVA). The chain is Tetraacyldisaccharide 4'-kinase from Ruthia magnifica subsp. Calyptogena magnifica.